We begin with the raw amino-acid sequence, 258 residues long: Axonemal dynein light intermediate polypeptide 1 (258 aa).

Disordered regions lie at residues 19 to 60 and 207 to 231; these read RNTE…CVPD and VNEQ…EEKK. Positions 34–48 are enriched in low complexity; sequence SPQQPGPSGSAPQLP. Residues 176–255 adopt a coiled-coil conformation; it reads MRKALQAEQG…LKAQLEGIIA (80 aa).

The protein belongs to the inner dynein arm light chain family. As to quaternary structure, interacts with CFAP45. Interacts with DYNC1H1.

It localises to the cell projection. The protein resides in the cilium. The protein localises to the flagellum. It is found in the dynein axonemal particle. Its subcellular location is the cytoplasm. Involved in sperm flagellum assembly. The chain is Axonemal dynein light intermediate polypeptide 1 (DNALI1) from Macaca fascicularis (Crab-eating macaque).